Here is a 260-residue protein sequence, read N- to C-terminus: Protein FAM220A (260 aa).

Disordered regions lie at residues 1–75 (MKAG…SKAS) and 129–158 (GSDW…GRPG). The segment covering 35–47 (RNPSPSVVPSWTD) has biased composition (polar residues).

Interacts with transcriptional activator STAT3; the interaction occurs in both the nucleus and the cytoplasm, is enhanced by IL6 and promotes STAT3 dephosphorylation, leading to negative regulation of STAT3 transcriptional activator activity. Can interact with both unphosphorylated and phosphorylated STAT3 but interacts preferentially with phosphorylated STAT3 in the nucleus. Interacts with protein phosphatase PTPN2/TC45; this promotes interaction of PTPN2 with STAT3, leading to dephosphorylation of STAT3 by PTPN2. Expressed at high levels in the testis where it is detected within elongated spermatids during the late stages (steps 9-16) of haploid germ cell development and in the tubular lumen (at protein level).

Its subcellular location is the nucleus. It is found in the cytoplasm. It localises to the cytoplasmic vesicle. The protein localises to the secretory vesicle. The protein resides in the acrosome. Promotes dephosphorylation of transcriptional activator STAT3 by interacting with both STAT3 and protein phosphatase PTPN2. This promotes interaction of PTPN2 with STAT3 and mediates STAT3 dephosphorylation by PTPN2, leading to negative regulation of STAT3 transcriptional activator activity. May be required for spermiogenesis or sperm function. The sequence is that of Protein FAM220A from Mus musculus (Mouse).